The following is a 216-amino-acid chain: Somatotropin (216 aa).

Residues 1 to 26 form the signal peptide; the sequence is MATDSRTSWLLTVSLLCLLWPQEASA. Histidine 45 is a binding site for Zn(2+). A disulfide bridge links cysteine 78 with cysteine 189. Serine 131 carries the post-translational modification Phosphoserine. Glutamate 198 is a binding site for Zn(2+). Cysteines 206 and 214 form a disulfide.

This sequence belongs to the somatotropin/prolactin family.

The protein resides in the secreted. Functionally, plays an important role in growth control. Its major role in stimulating body growth is to stimulate the liver and other tissues to secrete IGF1. It stimulates both the differentiation and proliferation of myoblasts. It also stimulates amino acid uptake and protein synthesis in muscle and other tissues. The chain is Somatotropin (Gh1) from Mus musculus (Mouse).